The sequence spans 308 residues: Elongation factor Ts (308 aa).

Residues 80–83 (TDFV) are involved in Mg(2+) ion dislocation from EF-Tu.

The protein belongs to the EF-Ts family.

Its subcellular location is the cytoplasm. Associates with the EF-Tu.GDP complex and induces the exchange of GDP to GTP. It remains bound to the aminoacyl-tRNA.EF-Tu.GTP complex up to the GTP hydrolysis stage on the ribosome. In Rhizobium etli (strain CIAT 652), this protein is Elongation factor Ts.